Reading from the N-terminus, the 674-residue chain is Leucine-rich repeat transmembrane protein FLRT1 (674 aa).

The signal sequence occupies residues 1–51 (MVVAHSAATATTTPAATVTATVVMTTATMDLRDWLFLCYGLIAFLTEVIDS). Residues 52-552 (TTCPSVCRCD…QNAGPMAGLP (501 aa)) are Extracellular-facing. 2 cysteine pairs are disulfide-bonded: Cys-54–Cys-60 and Cys-58–Cys-67. One can recognise an LRRNT domain in the interval 54–80 (CPSVCRCDNGFIYCNDRGLTSIPSDIP). LRR repeat units follow at residues 81–105 (DDAT…LKTK), 106–126 (VKVQ…INLP), 127–149 (RSLR…SLAR), 151–175 (PLLE…AFAD), 176–197 (SKQL…SGLP), 198–220 (HTLE…AFKG), 222–246 (NSLR…TFSR), 247–269 (LQNL…NLPS), 270–292 (AHLQ…TLAK), and 293–316 (MREL…LFDD). Asn-305 is a glycosylation site (N-linked (GlcNAc...) asparagine). The 52-residue stretch at 328-379 (NPWFCGCNLMWLRDWVRARAAVVNVRGLMCQGPEKVRGMAIKDITSEMDECF) folds into the LRRCT domain. Cys-332 and Cys-357 are disulfide-bonded. One can recognise a Fibronectin type-III domain in the interval 437–532 (KTLVIQVKPL…VCAKAETADS (96 aa)). Residues 553 to 573 (LAGIIGGAVALVFLFLVLGAI) traverse the membrane as a helical segment. At 574-674 (CWYVHRAGEL…GIPDVDYSYT (101 aa)) the chain is on the cytoplasmic side. A phosphotyrosine mark is found at Tyr-600, Tyr-633, and Tyr-671.

Interacts with FGFR1. Interacts (via extracellular domain) with ADGRL1/LPHN1 and ADGRL3 (via olfactomedin-like domain). In terms of processing, phosphorylated in response to FGFR1 signaling, but is not a direct substrate of FGFR1 or SRC. A mutant where the Tyr phosphorylation sites have been replaced by Phe displays constitutive FGFR1-dependent activation of downstream MAP kinases. N-glycosylated. Post-translationally, proteolytic cleavage in the juxtamembrane region gives rise to a soluble ectodomain. Detected in brain (at protein level).

Its subcellular location is the cell membrane. It localises to the endoplasmic reticulum membrane. The protein localises to the cytoplasmic vesicle membrane. The protein resides in the cytoplasm. It is found in the perinuclear region. Its subcellular location is the cell junction. It localises to the focal adhesion. The protein localises to the secreted. The protein resides in the cell projection. It is found in the neuron projection. In terms of biological role, plays a role in fibroblast growth factor-mediated signaling cascades that lead to the activation of MAP kinases. Promotes neurite outgrowth via FGFR1-mediated activation of downstream MAP kinases. Promotes an increase both in neurite number and in neurite length. May play a role in cell-cell adhesion and cell guidance via its interaction with ADGRL1/LPHN1 and ADGRL3. This is Leucine-rich repeat transmembrane protein FLRT1 from Mus musculus (Mouse).